The chain runs to 68 residues: Large ribosomal subunit protein bL33c (68 aa).

Belongs to the bacterial ribosomal protein bL33 family.

It is found in the plastid. The protein is Large ribosomal subunit protein bL33c of Cuscuta exaltata (Tall dodder).